The chain runs to 286 residues: Putative inorganic pyrophosphatase C3A12.02 (286 aa).

Arg-85 is a binding site for diphosphate. Mg(2+) is bound by residues Asp-122, Asp-127, and Asp-159.

This sequence belongs to the PPase family. Requires Mg(2+) as cofactor.

Its subcellular location is the cytoplasm. It carries out the reaction diphosphate + H2O = 2 phosphate + H(+). This chain is Putative inorganic pyrophosphatase C3A12.02, found in Schizosaccharomyces pombe (strain 972 / ATCC 24843) (Fission yeast).